The primary structure comprises 287 residues: 4-diphosphocytidyl-2-C-methyl-D-erythritol kinase (287 aa).

Residue Lys11 is part of the active site. An ATP-binding site is contributed by 93-103 (PFGAGLGGGSS). The active site involves Asp135.

The protein belongs to the GHMP kinase family. IspE subfamily.

The catalysed reaction is 4-CDP-2-C-methyl-D-erythritol + ATP = 4-CDP-2-C-methyl-D-erythritol 2-phosphate + ADP + H(+). The protein operates within isoprenoid biosynthesis; isopentenyl diphosphate biosynthesis via DXP pathway; isopentenyl diphosphate from 1-deoxy-D-xylulose 5-phosphate: step 3/6. Its function is as follows. Catalyzes the phosphorylation of the position 2 hydroxy group of 4-diphosphocytidyl-2C-methyl-D-erythritol. The chain is 4-diphosphocytidyl-2-C-methyl-D-erythritol kinase from Chlorobium luteolum (strain DSM 273 / BCRC 81028 / 2530) (Pelodictyon luteolum).